We begin with the raw amino-acid sequence, 765 residues long: MSWSISSNQLNIENLLNEESLFFTGNGYIGVRGNFEEKYYDGASSIRGTYINAFHDITDINYGEKLYAFPETQQKLVNVIDAQTVQIYFGEEEERFSLFEGEVIQYERHLHMDKGFSERVIHWRSPGGKEVKLKFKRLTSFIYKELFIQEITIEPVNFFGKTKVVSTVNGDVSNFVDPSDPRVGSGHAKLLTVSDTVIEGDFVSIETKTKRSNLYAACTSTCRLNIDFQREYVKNEKSVETVLTFELTEKAIMTKINIYTDTLRHGDRPLRTGLDLCQKLSCLTFNDLKEQQKHYLDKFWLYADVEISGDQALQEGIRFNLFHLLQSAGRDRFSNIAAKGLSGEGYEGHYFWDTEIYMVPVFLMTNPELAKQLLIYRYSILDKARERAREMGHRKGALFPWRTISGGECSSYFPAGTAQYHISADIAYSYVQYYLVTKDLDFLKSYGAELLIETARLWMDTGHYHEGKFKIDAVTGPDEYTCIVNNNYYTNVMAKHNLRWAAKSVAELEKHAPDTLASLKAKLEITDEEIAEWIKAAEAMYLPYDPTLNINPQDDTFLQKQVWDFDNTPKEHYPLLLHYHPLTLYRYQVCKQADTVLAHFLLEDEQDESVIRDSYHYYEKITTHDSSLSSCVFSIMAAKIGELDKAYEYFIETARLDLDNTHGNTKDGLHMANMGGTWMAIVYGFAGLRIKESGLSLAPVIPKQWQSYRFSIQYLGRHISVSVDTKGTKVNLLNGEELTIKLYGKKHQLTKDEPLEITFNNGRVD.

Substrate is bound at residue 352-353 (WD). The Proton donor role is filled by Glu479. 591 to 592 (KQ) is a substrate binding site.

This sequence belongs to the glycosyl hydrolase 65 family. In terms of assembly, homodimer.

The enzyme catalyses alpha,alpha-trehalose + phosphate = beta-D-glucose 1-phosphate + D-glucose. The protein operates within glycan degradation; trehalose degradation. Its function is as follows. Catalyzes the reversible phosphorolytic cleavage of trehalose. Phosphorolysis is specific for trehalose. The protein is Alpha,alpha-trehalose phosphorylase (treP) of Geobacillus stearothermophilus (Bacillus stearothermophilus).